Reading from the N-terminus, the 295-residue chain is Bifunctional protein FolD (295 aa).

NADP(+) is bound by residues 165 to 167, Ser192, and Ile233; that span reads GRG.

This sequence belongs to the tetrahydrofolate dehydrogenase/cyclohydrolase family. Homodimer.

The catalysed reaction is (6R)-5,10-methylene-5,6,7,8-tetrahydrofolate + NADP(+) = (6R)-5,10-methenyltetrahydrofolate + NADPH. It carries out the reaction (6R)-5,10-methenyltetrahydrofolate + H2O = (6R)-10-formyltetrahydrofolate + H(+). The protein operates within one-carbon metabolism; tetrahydrofolate interconversion. Its function is as follows. Catalyzes the oxidation of 5,10-methylenetetrahydrofolate to 5,10-methenyltetrahydrofolate and then the hydrolysis of 5,10-methenyltetrahydrofolate to 10-formyltetrahydrofolate. This Tropheryma whipplei (strain TW08/27) (Whipple's bacillus) protein is Bifunctional protein FolD.